We begin with the raw amino-acid sequence, 298 residues long: Phosphatidylglycerol--prolipoprotein diacylglyceryl transferase (298 aa).

7 consecutive transmembrane segments (helical) span residues 17–37 (LAVR…IVVG), 59–79 (MMFY…VLFY), 97–117 (GGMS…LFAW), 129–149 (FVAP…FING), 204–224 (SQLY…FLFA), 230–250 (MGAI…TVEF), and 257–277 (FLGL…PMIL). Arg142 is an a 1,2-diacyl-sn-glycero-3-phospho-(1'-sn-glycerol) binding site.

It belongs to the Lgt family.

It is found in the cell inner membrane. The catalysed reaction is L-cysteinyl-[prolipoprotein] + a 1,2-diacyl-sn-glycero-3-phospho-(1'-sn-glycerol) = an S-1,2-diacyl-sn-glyceryl-L-cysteinyl-[prolipoprotein] + sn-glycerol 1-phosphate + H(+). It participates in protein modification; lipoprotein biosynthesis (diacylglyceryl transfer). Its function is as follows. Catalyzes the transfer of the diacylglyceryl group from phosphatidylglycerol to the sulfhydryl group of the N-terminal cysteine of a prolipoprotein, the first step in the formation of mature lipoproteins. The sequence is that of Phosphatidylglycerol--prolipoprotein diacylglyceryl transferase from Burkholderia orbicola (strain MC0-3).